A 313-amino-acid polypeptide reads, in one-letter code: MFFTVRTLSNRTSHVLNCAFAQCRLLSSTASAKGVPRLIKAIQGSSKEPLTDLQLRLIGDNRYGEDSWFVSSTPKAETMGVADGVGGWRKLGIDAGVFARELMSHCSEFAEQAEYDGLNPRQLLIDSYDRLKNKRPCNVCGSSTACLVTLHRPDCTLHSANLGDSGFLVLRNGRVLHRSDEQLHCFNTPYQLTVPPHPAMDCVLRDSPEQAVSTHLPLQPGDLVLLATDGLFDNVPESMLINQLRALQGETRAEYLQQAANRLVDLAKTLSVSPTFQSPFALKARANNVDYGIGGKPDDITVILASLEVPDKL.

One can recognise a PPM-type phosphatase domain in the interval 47–307; the sequence is KEPLTDLQLR…DDITVILASL (261 aa). Positions 83, 84, and 229 each coordinate Mn(2+).

Belongs to the PP2C family. It depends on Mg(2+) as a cofactor. Mn(2+) is required as a cofactor.

The catalysed reaction is O-phospho-L-seryl-[protein] + H2O = L-seryl-[protein] + phosphate. The enzyme catalyses O-phospho-L-threonyl-[protein] + H2O = L-threonyl-[protein] + phosphate. The protein is Protein phosphatase PTC7 homolog fig of Drosophila virilis (Fruit fly).